The chain runs to 383 residues: Delta(12)-fatty-acid desaturase FAD2 (383 aa).

2 consecutive transmembrane segments (helical) span residues 56-76 (VVYD…YFHL) and 84-104 (VAWP…WVIA). The Histidine box-1 motif lies at 105–109 (HECGH). A helical transmembrane segment spans residues 117–137 (LLDDIVGLVLHSCLLVPYFSW). The Histidine box-2 signature appears at 141 to 145 (HRRHH). The next 3 membrane-spanning stretches (helical) occupy residues 179–199 (LFTL…FNVS), 225–245 (IYIS…LAAA), and 249–269 (AWVI…LVMI). A Histidine box-3 motif is present at residues 315-319 (HVAHH).

It belongs to the fatty acid desaturase type 1 family. Expressed in leaves and seeds.

It localises to the endoplasmic reticulum membrane. It carries out the reaction (9Z)-octadecenoyl-CoA + 2 Fe(II)-[cytochrome b5] + O2 + 2 H(+) = (9Z,12Z)-octadecadienoyl-CoA + 2 Fe(III)-[cytochrome b5] + 2 H2O. The catalysed reaction is (9Z)-hexadecenoyl-CoA + 2 Fe(II)-[cytochrome b5] + O2 + 2 H(+) = (9Z,12Z)-hexadecadienoyl-CoA + 2 Fe(III)-[cytochrome b5] + 2 H2O. It participates in lipid metabolism; polyunsaturated fatty acid biosynthesis. Its function is as follows. Catalyzes the desaturation of oleic acid (18:1(9Z)) to linoleic acid (18:2(9Z,12Z)). This chain is Delta(12)-fatty-acid desaturase FAD2, found in Vernicia fordii (Tung).